We begin with the raw amino-acid sequence, 493 residues long: 3-octaprenyl-4-hydroxybenzoate carboxy-lyase (493 aa).

Residue N175 participates in Mn(2+) binding. Prenylated FMN is bound by residues 178–180 (IYR), 192–194 (RWL), and 197–198 (RG). E241 is a binding site for Mn(2+). The Proton donor role is filled by D290.

It belongs to the UbiD family. As to quaternary structure, homohexamer. Requires prenylated FMN as cofactor. The cofactor is Mn(2+).

It localises to the cell membrane. It catalyses the reaction a 4-hydroxy-3-(all-trans-polyprenyl)benzoate + H(+) = a 2-(all-trans-polyprenyl)phenol + CO2. Its pathway is cofactor biosynthesis; ubiquinone biosynthesis. Its function is as follows. Catalyzes the decarboxylation of 3-octaprenyl-4-hydroxy benzoate to 2-octaprenylphenol, an intermediate step in ubiquinone biosynthesis. This Photorhabdus laumondii subsp. laumondii (strain DSM 15139 / CIP 105565 / TT01) (Photorhabdus luminescens subsp. laumondii) protein is 3-octaprenyl-4-hydroxybenzoate carboxy-lyase.